We begin with the raw amino-acid sequence, 407 residues long: MRIRRRALVFATMSAVLCTAGFMPSAGEAAADNGAGEETKSYAETYRLTADDVANINALNESAPAASSAGPSFRAPDSDDRVTPPAEPLDRMPDPYRPSYGRAETVVNNYIRKWQQVYSHRDGRKQQMTEEQREWLSYGCVGVTWVNSGQYPTNRLAFASFDEDRFKNELKNGRPRSGETRAEFEGRVAKESFDEEKGFQRAREVASVMNRALENAHDESAYLDNLKKELANGNDALRNEDARSPFYSALRNTPSFKERNGGNHDPSRMKAVIYSKHFWSGQDRSSSADKRKYGDPDAFRPAPGTGLVDMSRDRNIPRSPTSPGEGFVNFDYGWFGAQTEADADKTVWTHGNHYHAPNGSLGAMHVYESKFRNWSEGYSDFDRGAYVITFIPKSWNTAPDKVKQGWP.

The first 31 residues, 1–31 (MRIRRRALVFATMSAVLCTAGFMPSAGEAAA), serve as a signal peptide directing secretion. The propeptide occupies 32-76 (DNGAGEETKSYAETYRLTADDVANINALNESAPAASSAGPSFRAP). Over residues 62-72 (SAPAASSAGPS) the composition is skewed to low complexity. The tract at residues 62–98 (SAPAASSAGPSFRAPDSDDRVTPPAEPLDRMPDPYRP) is disordered. Over residues 76–94 (PDSDDRVTPPAEPLDRMPD) the composition is skewed to basic and acidic residues. C140 is a catalytic residue. The tract at residues 282–322 (QDRSSSADKRKYGDPDAFRPAPGTGLVDMSRDRNIPRSPTS) is disordered. Basic and acidic residues predominate over residues 286–298 (SSADKRKYGDPDA). Active-site residues include D331 and H350.

The protein belongs to the bacterial TGase family.

The catalysed reaction is L-glutaminyl-[protein] + L-lysyl-[protein] = [protein]-L-lysyl-N(6)-5-L-glutamyl-[protein] + NH4(+). In terms of biological role, catalyzes the cross-linking of proteins and the conjugation of polyamines to proteins. The sequence is that of Protein-glutamine gamma-glutamyltransferase from Streptomyces mobaraensis (Streptoverticillium mobaraense).